The primary structure comprises 488 residues: Cobyric acid synthase (488 aa).

Positions 255 to 442 (ALKIAVPVLP…LHGLFGSDAY (188 aa)) constitute a GATase cobBQ-type domain. Catalysis depends on Cys-337, which acts as the Nucleophile. Residue His-434 is part of the active site.

It belongs to the CobB/CobQ family. CobQ subfamily.

It functions in the pathway cofactor biosynthesis; adenosylcobalamin biosynthesis. Its function is as follows. Catalyzes amidations at positions B, D, E, and G on adenosylcobyrinic A,C-diamide. NH(2) groups are provided by glutamine, and one molecule of ATP is hydrogenolyzed for each amidation. The polypeptide is Cobyric acid synthase (Rhizobium johnstonii (strain DSM 114642 / LMG 32736 / 3841) (Rhizobium leguminosarum bv. viciae)).